The following is a 131-amino-acid chain: Profilin (131 aa).

Belongs to the profilin family. In terms of assembly, occurs in many kinds of cells as a complex with monomeric actin in a 1:1 ratio.

It is found in the cytoplasm. Its subcellular location is the cytoskeleton. Its function is as follows. Binds to actin and affects the structure of the cytoskeleton. At high concentrations, profilin prevents the polymerization of actin, whereas it enhances it at low concentrations. By binding to PIP2, it inhibits the formation of IP3 and DG. The chain is Profilin from Capsicum annuum (Capsicum pepper).